The primary structure comprises 254 residues: 4-hydroxy-tetrahydrodipicolinate reductase (254 aa).

8–13 (GAFGRM) serves as a coordination point for NAD(+). Lys36 serves as a coordination point for NADP(+). NAD(+) is bound by residues 89–91 (GTT) and 115–118 (STNY). Residue His147 is the Proton donor/acceptor of the active site. A (S)-2,3,4,5-tetrahydrodipicolinate-binding site is contributed by His148. Residue Lys151 is the Proton donor of the active site. 157–158 (GT) is a (S)-2,3,4,5-tetrahydrodipicolinate binding site.

Belongs to the DapB family.

The protein localises to the cytoplasm. The catalysed reaction is (S)-2,3,4,5-tetrahydrodipicolinate + NAD(+) + H2O = (2S,4S)-4-hydroxy-2,3,4,5-tetrahydrodipicolinate + NADH + H(+). It catalyses the reaction (S)-2,3,4,5-tetrahydrodipicolinate + NADP(+) + H2O = (2S,4S)-4-hydroxy-2,3,4,5-tetrahydrodipicolinate + NADPH + H(+). The protein operates within amino-acid biosynthesis; L-lysine biosynthesis via DAP pathway; (S)-tetrahydrodipicolinate from L-aspartate: step 4/4. Its function is as follows. Catalyzes the conversion of 4-hydroxy-tetrahydrodipicolinate (HTPA) to tetrahydrodipicolinate. The sequence is that of 4-hydroxy-tetrahydrodipicolinate reductase from Methanospirillum hungatei JF-1 (strain ATCC 27890 / DSM 864 / NBRC 100397 / JF-1).